The following is a 61-amino-acid chain: Photosystem II reaction center protein K (61 aa).

The propeptide occupies 1 to 24 (MPNILSLTCICFNSVIYPTSFFFA). Residues 32 to 52 (IFNPIVDFMPVIPVLFFLLAF) traverse the membrane as a helical segment.

The protein belongs to the PsbK family. In terms of assembly, PSII is composed of 1 copy each of membrane proteins PsbA, PsbB, PsbC, PsbD, PsbE, PsbF, PsbH, PsbI, PsbJ, PsbK, PsbL, PsbM, PsbT, PsbX, PsbY, PsbZ, Psb30/Ycf12, at least 3 peripheral proteins of the oxygen-evolving complex and a large number of cofactors. It forms dimeric complexes.

It is found in the plastid. Its subcellular location is the chloroplast thylakoid membrane. Its function is as follows. One of the components of the core complex of photosystem II (PSII). PSII is a light-driven water:plastoquinone oxidoreductase that uses light energy to abstract electrons from H(2)O, generating O(2) and a proton gradient subsequently used for ATP formation. It consists of a core antenna complex that captures photons, and an electron transfer chain that converts photonic excitation into a charge separation. The sequence is that of Photosystem II reaction center protein K from Oryza nivara (Indian wild rice).